A 497-amino-acid polypeptide reads, in one-letter code: MSTTTETVTWSQYKPQETQRRLSRSSTITPSVSEYRSGFSKTAFGNIELEEIPDKQGNITRATSNLESNSYPKALDPDACPPKRSIALVLLNNLMSEMSLTIALPISAAYTEILGGTDAFSGLVIGIPTMISLVCLYPMLRFANPKSANGYTLYFRPLIVSCISQIIGHLLYSLAYRAQWLYLILIGRMCSGVGFTMFLYHKTYLTDKNFVGQNRSTFLATLNILAQILGSMAGAFLGGILAKASMHLTDPIWNQYTAGSWFMLFIWIVYSIFLSIFFKEVRVGNTATNVRKPESFTGKTAPLSFKQKFMLCFLSMAAFISIFNVAGYQTSVPIYAKALYHYNPFQSGNFLSLSSLVIAPFVFFSTFLSKWLEDRQIMLYGFMMGIVALIVHLVLDAVHKIPVQPYFVLYSIMQFGFSVGSAPLVSLATKQLHPKYHMITGVVVQVGISIGETVGSICGGAIFDITTVGFIAMNLGIALLVFIQLLYLWTFIKTKTG.

Over residues methionine 1–glutamine 16 the composition is skewed to polar residues. The segment at methionine 1–threonine 29 is disordered. A Phosphoserine modification is found at serine 64. The next 6 membrane-spanning stretches (helical) occupy residues isoleucine 86 to isoleucine 106, phenylalanine 120 to leucine 140, phenylalanine 155 to alanine 175, tryptophan 180 to tyrosine 200, leucine 222 to alanine 242, and alanine 258 to phenylalanine 278. Serine 295 is subject to Phosphoserine. A run of 6 helical transmembrane segments spans residues phenylalanine 309–glutamine 329, glycine 348–leucine 368, isoleucine 377–alanine 397, phenylalanine 407–leucine 427, valine 443–phenylalanine 463, and valine 468–leucine 488.

The protein localises to the membrane. This is an uncharacterized protein from Schizosaccharomyces pombe (strain 972 / ATCC 24843) (Fission yeast).